The sequence spans 368 residues: Divinyl chlorophyll a/b light-harvesting protein PcbA (368 aa).

The next 6 membrane-spanning stretches (helical) occupy residues 27 to 47, 63 to 83, 89 to 109, 203 to 223, 243 to 263, and 307 to 327; these read FIAS…ANTL, GFVV…NGVI, MLVV…GAML, VMGG…WHIF, FVLS…AFWA, and LSNF…WHGL.

It belongs to the PsbB/PsbC family. IsiA/Pcb subfamily. The antenna complex consists of divinyl chlorophylls (a and b) and divinyl chlorophyll a/b binding proteins. Forms complexes with PSII, consisting of a PSII dimer and 4 or 8 PcbA subunits. These complexes are also found under conditions of iron-starvation. Requires divinyl chlorophyll a as cofactor. Divinyl chlorophyll b is required as a cofactor.

It localises to the cellular thylakoid membrane. In terms of biological role, the antenna complex functions as a light receptor, it captures and delivers excitation energy to photosystems II. The Prochlorales pcb genes are not related to higher plant LHCs. This Prochlorococcus marinus (strain MIT 9313) protein is Divinyl chlorophyll a/b light-harvesting protein PcbA (pcbA).